The chain runs to 202 residues: Imidazole glycerol phosphate synthase subunit HisH 2 (202 aa).

The Glutamine amidotransferase type-1 domain maps to methionine 1–alanine 202. The Nucleophile role is filled by cysteine 80. Active-site residues include histidine 183 and glutamate 185.

As to quaternary structure, heterodimer of HisH and HisF.

It is found in the cytoplasm. The enzyme catalyses 5-[(5-phospho-1-deoxy-D-ribulos-1-ylimino)methylamino]-1-(5-phospho-beta-D-ribosyl)imidazole-4-carboxamide + L-glutamine = D-erythro-1-(imidazol-4-yl)glycerol 3-phosphate + 5-amino-1-(5-phospho-beta-D-ribosyl)imidazole-4-carboxamide + L-glutamate + H(+). The catalysed reaction is L-glutamine + H2O = L-glutamate + NH4(+). The protein operates within amino-acid biosynthesis; L-histidine biosynthesis; L-histidine from 5-phospho-alpha-D-ribose 1-diphosphate: step 5/9. In terms of biological role, IGPS catalyzes the conversion of PRFAR and glutamine to IGP, AICAR and glutamate. The HisH subunit provides the glutamine amidotransferase activity that produces the ammonia necessary to HisF for the synthesis of IGP and AICAR. This chain is Imidazole glycerol phosphate synthase subunit HisH 2 (hisH2), found in Methanococcus maripaludis (strain DSM 14266 / JCM 13030 / NBRC 101832 / S2 / LL).